Reading from the N-terminus, the 213-residue chain is UPF0111 protein TM_0914 (213 aa).

This sequence belongs to the UPF0111 family.

This Thermotoga maritima (strain ATCC 43589 / DSM 3109 / JCM 10099 / NBRC 100826 / MSB8) protein is UPF0111 protein TM_0914.